The following is a 491-amino-acid chain: Ketol-acid reductoisomerase (NADP(+)) (491 aa).

The KARI N-terminal Rossmann domain occupies 15–208; the sequence is AQLGTCRFME…GGHRAGVLES (194 aa). NADP(+)-binding positions include 45-48, Arg-68, Arg-76, Ser-78, and 108-110; these read CGAQ and DKQ. His-132 is a catalytic residue. Residue Gly-158 participates in NADP(+) binding. KARI C-terminal knotted domains are found at residues 209 to 353 and 354 to 486; these read SFVA…KEQE and YFDK…MTAM. Mg(2+) contacts are provided by Asp-217, Glu-221, Glu-389, and Glu-393. Ser-414 contacts substrate.

The protein belongs to the ketol-acid reductoisomerase family. Mg(2+) serves as cofactor.

It carries out the reaction (2R)-2,3-dihydroxy-3-methylbutanoate + NADP(+) = (2S)-2-acetolactate + NADPH + H(+). The catalysed reaction is (2R,3R)-2,3-dihydroxy-3-methylpentanoate + NADP(+) = (S)-2-ethyl-2-hydroxy-3-oxobutanoate + NADPH + H(+). It functions in the pathway amino-acid biosynthesis; L-isoleucine biosynthesis; L-isoleucine from 2-oxobutanoate: step 2/4. It participates in amino-acid biosynthesis; L-valine biosynthesis; L-valine from pyruvate: step 2/4. In terms of biological role, involved in the biosynthesis of branched-chain amino acids (BCAA). Catalyzes an alkyl-migration followed by a ketol-acid reduction of (S)-2-acetolactate (S2AL) to yield (R)-2,3-dihydroxy-isovalerate. In the isomerase reaction, S2AL is rearranged via a Mg-dependent methyl migration to produce 3-hydroxy-3-methyl-2-ketobutyrate (HMKB). In the reductase reaction, this 2-ketoacid undergoes a metal-dependent reduction by NADPH to yield (R)-2,3-dihydroxy-isovalerate. The protein is Ketol-acid reductoisomerase (NADP(+)) of Christiangramia forsetii (strain DSM 17595 / CGMCC 1.15422 / KT0803) (Gramella forsetii).